The chain runs to 139 residues: ATP synthase epsilon chain (139 aa).

Belongs to the ATPase epsilon chain family. F-type ATPases have 2 components, CF(1) - the catalytic core - and CF(0) - the membrane proton channel. CF(1) has five subunits: alpha(3), beta(3), gamma(1), delta(1), epsilon(1). CF(0) has three main subunits: a, b and c.

The protein resides in the cell inner membrane. Produces ATP from ADP in the presence of a proton gradient across the membrane. In Marinomonas sp. (strain MWYL1), this protein is ATP synthase epsilon chain.